Consider the following 129-residue polypeptide: Cytochrome c oxidase subunit 5B, mitochondrial (129 aa).

The N-terminal 31 residues, 1–31, are a transit peptide targeting the mitochondrion; sequence MASRLLRGVGALAAQALRAHGPRGVAATRSM. N6-acetyllysine is present on residues Lys68 and Lys86. Residues Cys91, Cys93, Cys113, and Cys116 each coordinate Zn(2+). Lys121 is subject to N6-acetyllysine.

This sequence belongs to the cytochrome c oxidase subunit 5B family. Component of the cytochrome c oxidase (complex IV, CIV), a multisubunit enzyme composed of 14 subunits. The complex is composed of a catalytic core of 3 subunits MT-CO1, MT-CO2 and MT-CO3, encoded in the mitochondrial DNA, and 11 supernumerary subunits COX4I, COX5A, COX5B, COX6A, COX6B, COX6C, COX7A, COX7B, COX7C, COX8 and NDUFA4, which are encoded in the nuclear genome. The complex exists as a monomer or a dimer and forms supercomplexes (SCs) in the inner mitochondrial membrane with NADH-ubiquinone oxidoreductase (complex I, CI) and ubiquinol-cytochrome c oxidoreductase (cytochrome b-c1 complex, complex III, CIII), resulting in different assemblies (supercomplex SCI(1)III(2)IV(1) and megacomplex MCI(2)III(2)IV(2)).

It localises to the mitochondrion inner membrane. It participates in energy metabolism; oxidative phosphorylation. In terms of biological role, component of the cytochrome c oxidase, the last enzyme in the mitochondrial electron transport chain which drives oxidative phosphorylation. The respiratory chain contains 3 multisubunit complexes succinate dehydrogenase (complex II, CII), ubiquinol-cytochrome c oxidoreductase (cytochrome b-c1 complex, complex III, CIII) and cytochrome c oxidase (complex IV, CIV), that cooperate to transfer electrons derived from NADH and succinate to molecular oxygen, creating an electrochemical gradient over the inner membrane that drives transmembrane transport and the ATP synthase. Cytochrome c oxidase is the component of the respiratory chain that catalyzes the reduction of oxygen to water. Electrons originating from reduced cytochrome c in the intermembrane space (IMS) are transferred via the dinuclear copper A center (CU(A)) of subunit 2 and heme A of subunit 1 to the active site in subunit 1, a binuclear center (BNC) formed by heme A3 and copper B (CU(B)). The BNC reduces molecular oxygen to 2 water molecules using 4 electrons from cytochrome c in the IMS and 4 protons from the mitochondrial matrix. The protein is Cytochrome c oxidase subunit 5B, mitochondrial (Cox5b) of Rattus norvegicus (Rat).